A 236-amino-acid chain; its full sequence is Alanyl-tRNA editing protein AlaX-M (236 aa).

Residues histidine 101, histidine 105, and histidine 205 each coordinate Zn(2+).

It belongs to the class-II aminoacyl-tRNA synthetase family. Editing domain AlaX-M subfamily. Zn(2+) is required as a cofactor.

The protein localises to the cytoplasm. Its function is as follows. Functions in trans to edit the amino acid moiety from incorrectly charged Ser-tRNA(Ala). This Saccharolobus solfataricus (strain ATCC 35092 / DSM 1617 / JCM 11322 / P2) (Sulfolobus solfataricus) protein is Alanyl-tRNA editing protein AlaX-M (alaXM).